Here is a 210-residue protein sequence, read N- to C-terminus: MKKGVFIVIEGVDGSGKSSFLKRMMNEHTMINSQPIIYSREPGGCDTSEAVRELIMKLSNSDPLTEALLFCASRNEHLKKKILPALNENKIAICDRFVVSSWIYQGLIKNAGYEKVKKINEYVTDGLEPDLTILFDVDPEIAAKRISERSTMNHLDAYTKERINKIRNAYLERLKDNKKAKIINASLDLDTVYDQVVNIITLFVKNHELN.

11-18 (GVDGSGKS) lines the ATP pocket.

Belongs to the thymidylate kinase family.

It catalyses the reaction dTMP + ATP = dTDP + ADP. Phosphorylation of dTMP to form dTDP in both de novo and salvage pathways of dTTP synthesis. This is Thymidylate kinase from Mycoplasmoides gallisepticum (strain R(low / passage 15 / clone 2)) (Mycoplasma gallisepticum).